The following is a 469-amino-acid chain: MTAKFTDYIVKDIGLAEFGRKEISLAETEMPGLMATREEYGPKQPLKGAKIAGSLHMTIQTAVLIETLVALGAEVRWVSCNIYSTQDHAAAAIAAAGIPVFAVKGETLKDYWDYTAKLFDWSDGGTPNMILDDGGDATMFVHQGLRAENGDTMFLDQHNSEEEEIFFALIKRILKEKPKGYFATLAKNIKGVSEETTTGVHRLYDMEKAGKLLFPAINVNDSVTKSKFDNLYGCRESLVDGIRRGTDVMLSGKVAMVAGFGDVGKGSAASLRQAGCRVMVSEVDPICALQAAMEGYQVVTMEDAAPIADIFVTATGNKDIITIEHMRAMKDRAIVCNIGHFDNEIQVATLKNMKWDNIKPQVDEITFPDGKRMILLSEGRLVNLGNAMGHPSFVMSASFTNQTLAQIELFQNQGKYEKKVYVLPKSLDEKVARLHLAKIGVKLTELRKDQADYIGVKVEGPFKADHYRY.

The substrate site is built by T58, D133, and E195. NAD(+) is bound at residue 196–198 (TTT). 2 residues coordinate substrate: K225 and D229. NAD(+)-binding positions include N230, 259-264 (GFGDVG), E282, N317, 338-340 (IGH), and N383.

This sequence belongs to the adenosylhomocysteinase family. Requires NAD(+) as cofactor.

The protein localises to the cytoplasm. It carries out the reaction S-adenosyl-L-homocysteine + H2O = L-homocysteine + adenosine. It functions in the pathway amino-acid biosynthesis; L-homocysteine biosynthesis; L-homocysteine from S-adenosyl-L-homocysteine: step 1/1. May play a key role in the regulation of the intracellular concentration of adenosylhomocysteine. The polypeptide is Adenosylhomocysteinase (Rhodopseudomonas palustris (strain TIE-1)).